We begin with the raw amino-acid sequence, 422 residues long: Putative polyketide beta-ketoacyl synthase 1 (422 aa).

The 415-residue stretch at 2–416 folds into the Ketosynthase family 3 (KS3) domain; the sequence is TRRVAVTGIG…GFQSAVLLTG (415 aa). Residues C169, H309, and H346 each act as for beta-ketoacyl synthase activity in the active site.

This sequence belongs to the thiolase-like superfamily. Beta-ketoacyl-ACP synthases family.

It participates in antibiotic biosynthesis; curamycin biosynthesis. This chain is Putative polyketide beta-ketoacyl synthase 1 (curA), found in Streptomyces cyaneus (Streptomyces curacoi).